We begin with the raw amino-acid sequence, 120 residues long: MADTVTSARATARYVRVTPMKARRVIDTVRGKSVEEALDILKYAPQSASEPVYKVVASAAANAENNFGLDRNSLVIAQAWADEGPTMRRFRPRAQGRAFHVRKRTSHITVVVESQKGSAQ.

This sequence belongs to the universal ribosomal protein uL22 family. Part of the 50S ribosomal subunit.

This protein binds specifically to 23S rRNA; its binding is stimulated by other ribosomal proteins, e.g. L4, L17, and L20. It is important during the early stages of 50S assembly. It makes multiple contacts with different domains of the 23S rRNA in the assembled 50S subunit and ribosome. Functionally, the globular domain of the protein is located near the polypeptide exit tunnel on the outside of the subunit, while an extended beta-hairpin is found that lines the wall of the exit tunnel in the center of the 70S ribosome. This chain is Large ribosomal subunit protein uL22, found in Corynebacterium kroppenstedtii (strain DSM 44385 / JCM 11950 / CIP 105744 / CCUG 35717).